Here is a 331-residue protein sequence, read N- to C-terminus: MEKFLRYNIQIGKDQNKDADYGVFVFKPLERGFGHTLGNSLRRVLLSNIIGHSLFAIKIPNVSHEFQSIKGVKEDLTQIILNLKRLVVKIDQEIFGEEEQKETSLEKWPTLKIDFSKGGVLKASDIETPVGFEIINKDMYIATIESGVKFKMELFVKTGRGFTTFSENKELINAINVIAVDSNFSPVLKVGYKVSDIKTTKNEINDVLELEVATNGAVSAAEAVAMSAKILLEHYKPIVTELFDNYNDLRIINEEATVSSSKSSLAISIDELELSVRSYNCLKRAGIHTITQLTDKTKGEIEKIRNLGKKSFKEIIKKIQDRNLKLKEEQN.

The segment at 1 to 242 is alpha N-terminal domain (alpha-NTD); that stretch reads MEKFLRYNIQ…EHYKPIVTEL (242 aa). An alpha C-terminal domain (alpha-CTD) region spans residues 258-331; the sequence is VSSSKSSLAI…RNLKLKEEQN (74 aa).

This sequence belongs to the RNA polymerase alpha chain family. As to quaternary structure, homodimer. The RNAP catalytic core consists of 2 alpha, 1 beta, 1 beta' and 1 omega subunit. When a sigma factor is associated with the core the holoenzyme is formed, which can initiate transcription.

It catalyses the reaction RNA(n) + a ribonucleoside 5'-triphosphate = RNA(n+1) + diphosphate. In terms of biological role, DNA-dependent RNA polymerase catalyzes the transcription of DNA into RNA using the four ribonucleoside triphosphates as substrates. The sequence is that of DNA-directed RNA polymerase subunit alpha from Malacoplasma penetrans (strain HF-2) (Mycoplasma penetrans).